A 275-amino-acid chain; its full sequence is Large ribosomal subunit protein uL2 (275 aa).

The interval 224-251 (VMNPVDHPHGGGEGRSPIGRKAPVTPWG) is disordered.

This sequence belongs to the universal ribosomal protein uL2 family. Part of the 50S ribosomal subunit. Forms a bridge to the 30S subunit in the 70S ribosome.

Its function is as follows. One of the primary rRNA binding proteins. Required for association of the 30S and 50S subunits to form the 70S ribosome, for tRNA binding and peptide bond formation. It has been suggested to have peptidyltransferase activity; this is somewhat controversial. Makes several contacts with the 16S rRNA in the 70S ribosome. This is Large ribosomal subunit protein uL2 from Heliobacterium modesticaldum (strain ATCC 51547 / Ice1).